The primary structure comprises 545 residues: Glucose-6-phosphate isomerase (545 aa).

Glu351 serves as the catalytic Proton donor. Active-site residues include His382 and Lys510.

Belongs to the GPI family.

It is found in the cytoplasm. It catalyses the reaction alpha-D-glucose 6-phosphate = beta-D-fructose 6-phosphate. It functions in the pathway carbohydrate biosynthesis; gluconeogenesis. The protein operates within carbohydrate degradation; glycolysis; D-glyceraldehyde 3-phosphate and glycerone phosphate from D-glucose: step 2/4. Functionally, catalyzes the reversible isomerization of glucose-6-phosphate to fructose-6-phosphate. This is Glucose-6-phosphate isomerase from Shewanella oneidensis (strain ATCC 700550 / JCM 31522 / CIP 106686 / LMG 19005 / NCIMB 14063 / MR-1).